We begin with the raw amino-acid sequence, 435 residues long: Glutamate-1-semialdehyde 2,1-aminomutase (435 aa).

Lys-270 bears the N6-(pyridoxal phosphate)lysine mark.

This sequence belongs to the class-III pyridoxal-phosphate-dependent aminotransferase family. HemL subfamily. Homodimer. Pyridoxal 5'-phosphate is required as a cofactor.

The protein localises to the cytoplasm. It catalyses the reaction (S)-4-amino-5-oxopentanoate = 5-aminolevulinate. The protein operates within porphyrin-containing compound metabolism; protoporphyrin-IX biosynthesis; 5-aminolevulinate from L-glutamyl-tRNA(Glu): step 2/2. This chain is Glutamate-1-semialdehyde 2,1-aminomutase, found in Wigglesworthia glossinidia brevipalpis.